The chain runs to 505 residues: Glycerol kinase (505 aa).

Thr-12 serves as a coordination point for ADP. Residues Thr-12, Thr-13, and Ser-14 each contribute to the ATP site. Thr-12 provides a ligand contact to sn-glycerol 3-phosphate. Position 16 (Arg-16) interacts with ADP. Arg-82, Glu-83, Tyr-134, and Asp-249 together coordinate sn-glycerol 3-phosphate. Glycerol is bound by residues Arg-82, Glu-83, Tyr-134, Asp-249, and Gln-250. ADP contacts are provided by Thr-271 and Gly-315. Thr-271, Gly-315, Gln-319, and Gly-416 together coordinate ATP. Gly-416 and Asn-420 together coordinate ADP.

This sequence belongs to the FGGY kinase family.

The catalysed reaction is glycerol + ATP = sn-glycerol 3-phosphate + ADP + H(+). It functions in the pathway polyol metabolism; glycerol degradation via glycerol kinase pathway; sn-glycerol 3-phosphate from glycerol: step 1/1. Its activity is regulated as follows. Inhibited by fructose 1,6-bisphosphate (FBP). Functionally, key enzyme in the regulation of glycerol uptake and metabolism. Catalyzes the phosphorylation of glycerol to yield sn-glycerol 3-phosphate. This is Glycerol kinase from Mycolicibacterium gilvum (strain PYR-GCK) (Mycobacterium gilvum (strain PYR-GCK)).